Reading from the N-terminus, the 360-residue chain is Deoxyhypusine hydroxylase (360 aa).

HEAT-like PBS-type repeat units follow at residues 56-82, 89-115, and 213-245; these read LKHE…ILQD, VRHE…YRSD, and ERYR…GLQD. 4 residues coordinate Fe cation: His58, Glu59, His91, and Glu92. 4 residues coordinate Fe cation: His252, Glu253, His285, and Glu286.

This sequence belongs to the deoxyhypusine hydroxylase family. Fe(2+) is required as a cofactor.

The protein resides in the cytoplasm. It localises to the nucleus. It catalyses the reaction [eIF5A protein]-deoxyhypusine + AH2 + O2 = [eIF5A protein]-hypusine + A + H2O. Its pathway is protein modification; eIF5A hypusination. Catalyzes the hydroxylation of the N(6)-(4-aminobutyl)-L-lysine intermediate to form hypusine, an essential post-translational modification only found in mature eIF-5A factor. The sequence is that of Deoxyhypusine hydroxylase from Mycosarcoma maydis (Corn smut fungus).